The sequence spans 780 residues: TSC22 domain family protein 2 (780 aa).

5 disordered regions span residues 20 to 86 (AQVA…TVSP), 126 to 158 (TSAP…PTTC), 235 to 499 (AHGP…PGGP), 587 to 607 (LVGQ…PPLS), and 736 to 780 (LSSN…VSSA). The segment covering 28 to 37 (EDTESLDDPD) has biased composition (acidic residues). Positions 126–146 (TSAPAPGAPGGPQLAGSSAGP) are enriched in low complexity. Residues 241–262 (GTDSSLTAVSQLPPSEKMSQPT) are compositionally biased toward polar residues. Composition is skewed to low complexity over residues 297–316 (GAAT…QPQG), 344–361 (PAVG…AYPQ), and 395–412 (QPSS…ATLP). Residues 415–434 (TGQNASSVGAQLMGASSQPS) show a composition bias toward polar residues. The span at 453 to 468 (QPTGVPPATVGGVVQP) shows a compositional bias: low complexity. Over residues 736 to 756 (LSSNDQLSQLPTQQANPGSTS) the composition is skewed to polar residues. Over residues 765-774 (PPQPTQPPQQ) the composition is skewed to pro residues.

It belongs to the TSC-22/Dip/Bun family. In terms of assembly, interacts with NRBP1. Interacts with PKM isoform M2; the interaction results in reduced nuclear levels of PKM isoform M2, leading to repression of cyclin CCND1 transcription and reduced cell growth. Interacts with WDR77.

Functionally, reduces the level of nuclear PKM isoform M2 which results in repression of cyclin CCND1 transcription and reduced cell growth. The sequence is that of TSC22 domain family protein 2 from Homo sapiens (Human).